Here is a 253-residue protein sequence, read N- to C-terminus: Vitamin B12 import ATP-binding protein BtuD (253 aa).

Residues 3 to 237 (LDAKNLAMPP…EQLESTFATQ (235 aa)) form the ABC transporter domain. Position 31 to 38 (31 to 38 (GPNGSGKS)) interacts with ATP.

It belongs to the ABC transporter superfamily. Vitamin B12 importer (TC 3.A.1.13.1) family. As to quaternary structure, the complex is composed of two ATP-binding proteins (BtuD), two transmembrane proteins (BtuC) and a solute-binding protein (BtuF).

The protein resides in the cell inner membrane. The catalysed reaction is an R-cob(III)alamin(out) + ATP + H2O = an R-cob(III)alamin(in) + ADP + phosphate + H(+). Its function is as follows. Part of the ABC transporter complex BtuCDF involved in vitamin B12 import. Responsible for energy coupling to the transport system. In Photobacterium profundum (strain SS9), this protein is Vitamin B12 import ATP-binding protein BtuD.